Consider the following 433-residue polypeptide: Malate synthase (433 aa).

An acetyl-CoA-binding site is contributed by 16–17 (TS). Residue Asp52 participates in Mg(2+) binding. Arg84 serves as a coordination point for acetyl-CoA. Residues Arg84, Glu158, and 191-192 (VD) contribute to the glyoxylate site. 2 residues coordinate Mg(2+): Glu158 and Asp192. Acetyl-CoA-binding residues include Arg236 and Leu259. Asp388 (proton acceptor) is an active-site residue.

It belongs to the HpcH/HpaI aldolase family. As to quaternary structure, homotrimer and homohexamer in equilibrium. Requires Mg(2+) as cofactor.

It is found in the cytoplasm. It catalyses the reaction glyoxylate + acetyl-CoA + H2O = (S)-malate + CoA + H(+). The protein operates within carbohydrate metabolism; glyoxylate cycle; (S)-malate from isocitrate: step 2/2. Its function is as follows. Involved in the glyoxylate cycle which synthesizes precursors for carbohydrates from C2 compounds such as acetate. Catalyzes the Claisen condensation between acetyl-coenzyme A (acetyl-CoA) and glyoxylate to form the malyl-CoA intermediate that is subsequently hydrolyzed to produce malate and CoA. This chain is Malate synthase (aceB), found in Haloferax volcanii (strain ATCC 29605 / DSM 3757 / JCM 8879 / NBRC 14742 / NCIMB 2012 / VKM B-1768 / DS2) (Halobacterium volcanii).